We begin with the raw amino-acid sequence, 469 residues long: Glutamate--tRNA ligase (469 aa).

A 'HIGH' region motif is present at residues 11–21 (PSPTGFIHLGN). The segment covering 118 to 131 (GEKPRYDGTWRPEP) has biased composition (basic and acidic residues). Positions 118–139 (GEKPRYDGTWRPEPGKVLPEPP) are disordered. Residues 243-247 (KMSKR) carry the 'KMSKS' region motif. ATP is bound at residue lysine 246.

This sequence belongs to the class-I aminoacyl-tRNA synthetase family. Glutamate--tRNA ligase type 1 subfamily. Monomer.

The protein resides in the cytoplasm. It carries out the reaction tRNA(Glu) + L-glutamate + ATP = L-glutamyl-tRNA(Glu) + AMP + diphosphate. Functionally, catalyzes the attachment of glutamate to tRNA(Glu) in a two-step reaction: glutamate is first activated by ATP to form Glu-AMP and then transferred to the acceptor end of tRNA(Glu). In Burkholderia mallei (strain NCTC 10247), this protein is Glutamate--tRNA ligase.